Here is a 538-residue protein sequence, read N- to C-terminus: Probable cytochrome P450 309a2 (538 aa).

Residue Cys-483 participates in heme binding.

It belongs to the cytochrome P450 family. Heme serves as cofactor.

It is found in the endoplasmic reticulum membrane. The protein localises to the microsome membrane. Functionally, may be involved in the metabolism of insect hormones and in the breakdown of synthetic insecticides. The chain is Probable cytochrome P450 309a2 (Cyp309a2) from Drosophila melanogaster (Fruit fly).